The chain runs to 224 residues: Peptidyl-prolyl cis-trans isomerase FKBP3 (224 aa).

Alanine 2 bears the N-acetylalanine mark. Serine 36 carries the phosphoserine modification. A compositionally biased stretch (basic and acidic residues) spans 89-102 (KLNEDKPKETKSEE). A disordered region spans residues 89 to 113 (KLNEDKPKETKSEETLDEGPPKYTK). The residue at position 99 (lysine 99) is an N6-acetyllysine. The 97-residue stretch at 128 to 224 (GDVVHCWYTG…IFEVELVDID (97 aa)) folds into the PPIase FKBP-type domain. The residue at position 152 (serine 152) is a Phosphoserine. Lysine 170 bears the N6-acetyllysine mark.

This sequence belongs to the FKBP-type PPIase family.

Its subcellular location is the nucleus. It carries out the reaction [protein]-peptidylproline (omega=180) = [protein]-peptidylproline (omega=0). Inhibited preferentially by rapamycin over FK506. In terms of biological role, FK506- and rapamycin-binding proteins (FKBPs) constitute a family of receptors for the two immunosuppressants which inhibit T-cell proliferation by arresting two dinstinct cytoplasmic signal transmission pathways. PPIases accelerate the folding of proteins. The protein is Peptidyl-prolyl cis-trans isomerase FKBP3 (FKBP3) of Bos taurus (Bovine).